The chain runs to 410 residues: Divergent protein kinase domain 1A (410 aa).

At 1–5 (MARLS) the chain is on the cytoplasmic side. The helical transmembrane segment at 6–26 (YVRIKYLFFSWLAVFIGSWVI) threads the bilayer. At 27–410 (YVRYNSYTEL…WKKISHTNDS (384 aa)) the chain is on the lumenal side.

This sequence belongs to the DIPK family. Among the many cysteines in the lumenal domain, most are probably involved in disulfide bonds.

It localises to the endoplasmic reticulum membrane. The chain is Divergent protein kinase domain 1A (dipk1a) from Xenopus laevis (African clawed frog).